The sequence spans 296 residues: Light-independent protochlorophyllide reductase iron-sulfur ATP-binding protein (296 aa).

ATP contacts are provided by residues Gly-10–Thr-15 and Lys-39. Residue Ser-14 participates in Mg(2+) binding. Positions 95 and 129 each coordinate [4Fe-4S] cluster. An ATP-binding site is contributed by Asn-180–Arg-181.

The protein belongs to the NifH/BchL/ChlL family. As to quaternary structure, homodimer. Protochlorophyllide reductase is composed of three subunits; ChlL, ChlN and ChlB. It depends on [4Fe-4S] cluster as a cofactor.

It localises to the plastid. Its subcellular location is the chloroplast. It catalyses the reaction chlorophyllide a + oxidized 2[4Fe-4S]-[ferredoxin] + 2 ADP + 2 phosphate = protochlorophyllide a + reduced 2[4Fe-4S]-[ferredoxin] + 2 ATP + 2 H2O. It participates in porphyrin-containing compound metabolism; chlorophyll biosynthesis (light-independent). Its function is as follows. Component of the dark-operative protochlorophyllide reductase (DPOR) that uses Mg-ATP and reduced ferredoxin to reduce ring D of protochlorophyllide (Pchlide) to form chlorophyllide a (Chlide). This reaction is light-independent. The L component serves as a unique electron donor to the NB-component of the complex, and binds Mg-ATP. In Mesostigma viride (Green alga), this protein is Light-independent protochlorophyllide reductase iron-sulfur ATP-binding protein.